Here is a 451-residue protein sequence, read N- to C-terminus: Chaperone SurA (451 aa).

Positions 1–26 are cleaved as a signal peptide; the sequence is MKKIIPTNLFKLISILFILTPFFAWS. PpiC domains lie at 179-280 and 290-388; these read DVEY…QLQG and KQYH…FLDG.

The protein resides in the periplasm. The enzyme catalyses [protein]-peptidylproline (omega=180) = [protein]-peptidylproline (omega=0). In terms of biological role, chaperone involved in the correct folding and assembly of outer membrane proteins. Recognizes specific patterns of aromatic residues and the orientation of their side chains, which are found more frequently in integral outer membrane proteins. May act in both early periplasmic and late outer membrane-associated steps of protein maturation. The protein is Chaperone SurA of Hydrogenovibrio crunogenus (strain DSM 25203 / XCL-2) (Thiomicrospira crunogena).